The primary structure comprises 164 residues: Large ribosomal subunit protein uL10 (164 aa).

The protein belongs to the universal ribosomal protein uL10 family. Part of the ribosomal stalk of the 50S ribosomal subunit. The N-terminus interacts with L11 and the large rRNA to form the base of the stalk. The C-terminus forms an elongated spine to which L12 dimers bind in a sequential fashion forming a multimeric L10(L12)X complex.

In terms of biological role, forms part of the ribosomal stalk, playing a central role in the interaction of the ribosome with GTP-bound translation factors. This chain is Large ribosomal subunit protein uL10, found in Aliivibrio salmonicida (strain LFI1238) (Vibrio salmonicida (strain LFI1238)).